A 200-amino-acid chain; its full sequence is Putative glucose-6-phosphate isomerase 2 (200 aa).

Fe cation-binding residues include His-92, His-94, Glu-101, and His-140.

This sequence belongs to the archaeal-type GPI family. Homodimer. It depends on Fe cation as a cofactor.

The protein resides in the cytoplasm. The catalysed reaction is alpha-D-glucose 6-phosphate = beta-D-fructose 6-phosphate. It functions in the pathway carbohydrate degradation; glycolysis; D-glyceraldehyde 3-phosphate and glycerone phosphate from D-glucose: step 2/4. The sequence is that of Putative glucose-6-phosphate isomerase 2 (pgiA2) from Rhizobium meliloti (strain 1021) (Ensifer meliloti).